Reading from the N-terminus, the 260-residue chain is MTFPYYASVEQLMRDRSELARKGISRGRSVVALTYTDGVLFVAENPSNSLQKVSEVYDRVGFAAVGKFNEFDRLRRGGIQWADMRGYAYDRRDVSGRQLANIYAEALGTIFNEQAKPYEVELCVGEVAHYGRDTEPVLYRITYDGSIADEPHWVVMGGNTEPVINSLKESYVEDSALKDAVGFAVKALQAGTAGANGSEGRALGGLEVAVLEQSRPRRAFRRIKGAALEALLPEDFSPGQTEGGGDPAPESGDSKDAKDN.

The disordered stretch occupies residues 231 to 260 (LLPEDFSPGQTEGGGDPAPESGDSKDAKDN).

Belongs to the peptidase T1A family. As to quaternary structure, the 20S proteasome core is composed of 14 alpha and 14 beta subunits that assemble into four stacked heptameric rings, resulting in a barrel-shaped structure. The two inner rings, each composed of seven catalytic beta subunits, are sandwiched by two outer rings, each composed of seven alpha subunits. The catalytic chamber with the active sites is on the inside of the barrel. Has a gated structure, the ends of the cylinder being occluded by the N-termini of the alpha-subunits. Is capped by the proteasome-associated ATPase, ARC.

The protein resides in the cytoplasm. The protein operates within protein degradation; proteasomal Pup-dependent pathway. With respect to regulation, the formation of the proteasomal ATPase ARC-20S proteasome complex, likely via the docking of the C-termini of ARC into the intersubunit pockets in the alpha-rings, may trigger opening of the gate for substrate entry. Interconversion between the open-gate and close-gate conformations leads to a dynamic regulation of the 20S proteasome proteolysis activity. Component of the proteasome core, a large protease complex with broad specificity involved in protein degradation. The chain is Proteasome subunit alpha from Mycobacteroides abscessus (strain ATCC 19977 / DSM 44196 / CCUG 20993 / CIP 104536 / JCM 13569 / NCTC 13031 / TMC 1543 / L948) (Mycobacterium abscessus).